Here is a 147-residue protein sequence, read N- to C-terminus: Hemoglobin subunit beta-1 (147 aa).

One can recognise a Globin domain in the interval 3–147; the sequence is NLTAKERQLI…IADALGKGYH (145 aa). Residues H64 and H93 each coordinate heme b.

The protein belongs to the globin family. Heterotetramer of two alpha chains and two beta chains. Red blood cells.

Its function is as follows. Involved in oxygen transport from the lung to the various peripheral tissues. In Xenopus tropicalis (Western clawed frog), this protein is Hemoglobin subunit beta-1 (hbb1).